Here is a 203-residue protein sequence, read N- to C-terminus: Glycerol-3-phosphate acyltransferase (203 aa).

4 helical membrane passes run 3 to 23 (LASA…AILV), 75 to 95 (LGLE…GHLF), 113 to 133 (VILG…LIVA), and 156 to 176 (LLTG…LIYW).

It belongs to the PlsY family. Probably interacts with PlsX.

It localises to the cell inner membrane. The catalysed reaction is an acyl phosphate + sn-glycerol 3-phosphate = a 1-acyl-sn-glycero-3-phosphate + phosphate. The protein operates within lipid metabolism; phospholipid metabolism. Catalyzes the transfer of an acyl group from acyl-phosphate (acyl-PO(4)) to glycerol-3-phosphate (G3P) to form lysophosphatidic acid (LPA). This enzyme utilizes acyl-phosphate as fatty acyl donor, but not acyl-CoA or acyl-ACP. This chain is Glycerol-3-phosphate acyltransferase, found in Thioalkalivibrio sulfidiphilus (strain HL-EbGR7).